We begin with the raw amino-acid sequence, 216 residues long: Large ribosomal subunit protein uL3 (216 aa).

N5-methylglutamine is present on Q157.

This sequence belongs to the universal ribosomal protein uL3 family. As to quaternary structure, part of the 50S ribosomal subunit. Forms a cluster with proteins L14 and L19. In terms of processing, methylated by PrmB.

In terms of biological role, one of the primary rRNA binding proteins, it binds directly near the 3'-end of the 23S rRNA, where it nucleates assembly of the 50S subunit. This chain is Large ribosomal subunit protein uL3, found in Xanthomonas oryzae pv. oryzae (strain MAFF 311018).